We begin with the raw amino-acid sequence, 397 residues long: MGKAKFERSKPHVNIGTIGHVDHGKTTLTAAITITMHNRYGTGGAVAFDMIDKAPEERERGITISTAHVEYETDKRHYAHVDCPGHADYVKNMITGAAQMDGAILVCSAADGPMPQTREHILLSRQVGVPYIVVFLNKCDMVDDEELLELVEMEVRDLLNMYEFPGDDTPVIMGSALKALEDPAGPWGDKIVELFDAIDTWIPEPVRDTDKPFLMPVEDVFSITGRGTVATGRIERGIVKVQEEISLVGLSEAPRKLVVTGVEMFRKLLDQGQAGDNVGILLRGIQRDEIERGQVLAKTGSIQPHTKFMAEVYVLKKEEGGRHTPFFDGYRPQFYFRTTDVTGSIKLPEGVEMVMPGDNITMEIELISPIATEEGLRFAIREGGRTVGAGVVASIIE.

The tr-type G domain occupies 10–206 (KPHVNIGTIG…AIDTWIPEPV (197 aa)). Positions 19 to 26 (GHVDHGKT) are G1. 19 to 26 (GHVDHGKT) is a GTP binding site. Mg(2+) is bound at residue Thr-26. Positions 61–65 (GITIS) are G2. A G3 region spans residues 82–85 (DCPG). GTP is bound by residues 82-86 (DCPGH) and 137-140 (NKCD). The segment at 137–140 (NKCD) is G4. Positions 175–177 (SAL) are G5.

Belongs to the TRAFAC class translation factor GTPase superfamily. Classic translation factor GTPase family. EF-Tu/EF-1A subfamily. Monomer.

It localises to the cytoplasm. It catalyses the reaction GTP + H2O = GDP + phosphate + H(+). GTP hydrolase that promotes the GTP-dependent binding of aminoacyl-tRNA to the A-site of ribosomes during protein biosynthesis. This Alkaliphilus metalliredigens (strain QYMF) protein is Elongation factor Tu 1.